A 295-amino-acid polypeptide reads, in one-letter code: MSSSKPSFSDYFGKLGGIPMYKKFIEQFHNVEEFEARPDDLVIVTYPKSGTTWLSEIICMIYNNGDVEKCKEDVIFNRVPYLECSTEHVMKGVKQLNEMASPRIVKSHLPVKLLPVSFWEKNCKIIYLSRNAKDVVVSYYFLILMVTAIPDPDSFQDFVEKFMDGEVPYGSWFEHTKSWWEKSKNPQVLFLFYEDMKENIRKEVMKLLEFLGRKASDELVDKIIKHTSFQEMKNNPSTNYTTLPDEVMNQKVSPFMRKGDVGDWKNHFTVALNEKFDMHYEQQMKGSTLKFRTKI.

Lys-48–Trp-53 lines the 3'-phosphoadenylyl sulfate pocket. Lys-106 to His-108 contacts substrate. Residue His-108 is the Proton acceptor of the active site. Residues Arg-130, Ser-138, and Tyr-193 each contribute to the 3'-phosphoadenylyl sulfate site. Phosphoserine; by PKA is present on residues Ser-216 and Ser-228. Residues Thr-227–Met-232 and Arg-257–Gly-259 contribute to the 3'-phosphoadenylyl sulfate site.

This sequence belongs to the sulfotransferase 1 family. In terms of assembly, homodimer.

The protein resides in the cytoplasm. The protein localises to the cytosol. The catalysed reaction is estrone + 3'-phosphoadenylyl sulfate = estrone 3-sulfate + adenosine 3',5'-bisphosphate + H(+). The enzyme catalyses (24S)-hydroxycholesterol + 3'-phosphoadenylyl sulfate = (24S)-hydroxycholesterol 3-sulfate + adenosine 3',5'-bisphosphate + H(+). It carries out the reaction 17beta-estradiol + 3'-phosphoadenylyl sulfate = 17beta-estradiol 3-sulfate + adenosine 3',5'-bisphosphate + H(+). It catalyses the reaction 3beta-hydroxyandrost-5-en-17-one + 3'-phosphoadenylyl sulfate = dehydroepiandrosterone 3-sulfate + adenosine 3',5'-bisphosphate + H(+). The catalysed reaction is 4-ethylphenol + 3'-phosphoadenylyl sulfate = 4-ethylphenyl sulfate + adenosine 3',5'-bisphosphate + H(+). Its activity is regulated as follows. Inhibited by estradiol. Its function is as follows. Sulfotransferase that utilizes 3'-phospho-5'-adenylyl sulfate (PAPS) as sulfonate donor to catalyze the sulfate conjugation of estradiol and estrone. Is a key enzyme in estrogen homeostasis, the sulfation of estrogens leads to their inactivation. Also sulfates dehydroepiandrosterone (DHEA), pregnenolone, (24S)-hydroxycholesterol and xenobiotic compounds like ethinylestradiol, equalenin, diethyl stilbesterol and 1-naphthol at significantly lower efficiency. Does not sulfonate cortisol, testosterone and dopamine. May play a role in gut microbiota-host metabolic interaction. O-sulfonates 4-ethylphenol (4-EP), a dietary tyrosine-derived metabolite produced by gut bacteria. The product 4-EPS crosses the blood-brain barrier and may negatively regulate oligodendrocyte maturation and myelination, affecting the functional connectivity of different brain regions associated with the limbic system. The polypeptide is Sulfotransferase 1E1 (SULT1E1) (Bos taurus (Bovine)).